A 397-amino-acid chain; its full sequence is DNA-directed RNA polymerase subunit Rpo1C (397 aa).

It belongs to the RNA polymerase beta' chain family. In terms of assembly, part of the RNA polymerase complex.

The protein resides in the cytoplasm. It carries out the reaction RNA(n) + a ribonucleoside 5'-triphosphate = RNA(n+1) + diphosphate. In terms of biological role, DNA-dependent RNA polymerase (RNAP) catalyzes the transcription of DNA into RNA using the four ribonucleoside triphosphates as substrates. Forms part of the jaw domain. In Methanosarcina acetivorans (strain ATCC 35395 / DSM 2834 / JCM 12185 / C2A), this protein is DNA-directed RNA polymerase subunit Rpo1C.